A 362-amino-acid polypeptide reads, in one-letter code: Molybdenum import ATP-binding protein ModC (362 aa).

The 235-residue stretch at 4–238 folds into the ABC transporter domain; sequence AGEAAIRARF…LDLPIRLGED (235 aa). 38–45 serves as a coordination point for ATP; it reads GHSGSGKT. One can recognise a Mop domain in the interval 297–362; that stretch reads GTSILNTLPA…AQIKAVALVG (66 aa).

This sequence belongs to the ABC transporter superfamily. Molybdate importer (TC 3.A.1.8) family. As to quaternary structure, the complex is composed of two ATP-binding proteins (ModC), two transmembrane proteins (ModB) and a solute-binding protein (ModA).

It localises to the cell inner membrane. The catalysed reaction is molybdate(out) + ATP + H2O = molybdate(in) + ADP + phosphate + H(+). Its function is as follows. Part of the ABC transporter complex ModABC involved in molybdenum import. Responsible for energy coupling to the transport system. The chain is Molybdenum import ATP-binding protein ModC from Thiobacillus denitrificans (strain ATCC 25259 / T1).